Consider the following 702-residue polypeptide: Methionine--tRNA ligase (702 aa).

Positions Pro-23–His-33 match the 'HIGH' region motif. Cys-154, Cys-157, Cys-167, and Cys-170 together coordinate Zn(2+). The 'KMSKS' region signature appears at Lys-341–Ser-345. Lys-344 is an ATP binding site. The interval Leu-562–Pro-593 is disordered. Residues Ala-569–Asn-578 show a composition bias toward polar residues. In terms of domain architecture, tRNA-binding spans Asp-599 to Arg-702.

Belongs to the class-I aminoacyl-tRNA synthetase family. MetG type 1 subfamily. Homodimer. Zn(2+) serves as cofactor.

Its subcellular location is the cytoplasm. It catalyses the reaction tRNA(Met) + L-methionine + ATP = L-methionyl-tRNA(Met) + AMP + diphosphate. Its function is as follows. Is required not only for elongation of protein synthesis but also for the initiation of all mRNA translation through initiator tRNA(fMet) aminoacylation. The sequence is that of Methionine--tRNA ligase from Xylella fastidiosa (strain M12).